The sequence spans 486 residues: Cardiolipin synthase A (486 aa).

The next 2 helical transmembrane spans lie at 3–23 (TVYT…IAGV) and 38–58 (MAWL…YLAV). 2 consecutive PLD phosphodiesterase domains span residues 219-246 (MDLR…VDPR) and 399-426 (EGGL…DMRS). Catalysis depends on residues H224, K226, D231, H404, K406, and D411.

Belongs to the phospholipase D family. Cardiolipin synthase subfamily. ClsA sub-subfamily.

The protein resides in the cell inner membrane. The catalysed reaction is 2 a 1,2-diacyl-sn-glycero-3-phospho-(1'-sn-glycerol) = a cardiolipin + glycerol. Its function is as follows. Catalyzes the reversible phosphatidyl group transfer from one phosphatidylglycerol molecule to another to form cardiolipin (CL) (diphosphatidylglycerol) and glycerol. The polypeptide is Cardiolipin synthase A (Shigella dysenteriae serotype 1 (strain Sd197)).